Here is a 60-residue protein sequence, read N- to C-terminus: UPF0391 membrane protein CCNA_00709 (60 aa).

2 helical membrane-spanning segments follow: residues 4 to 24 and 33 to 53; these read WAIILAIVALIAGALGFSGLA and ILFFLFLVGFVLVLLLGGTVF.

Belongs to the UPF0391 family.

It localises to the cell membrane. This is UPF0391 membrane protein CCNA_00709 from Caulobacter vibrioides (strain NA1000 / CB15N) (Caulobacter crescentus).